Consider the following 551-residue polypeptide: Calnexin (551 aa).

Residues 1 to 23 form the signal peptide; it reads MRPQNVAGVAGTGALIMAAGALA. At 24–477 the chain is on the lumenal side; it reads DQTVFHPTSL…QAIKQMPEVA (454 aa). Positions 293 to 315 are disordered; that stretch reads EEEPETIPDPEAEKPEEWDDEED. A helical transmembrane segment spans residues 478–498; sequence AGLAAAVFTLLGMLLALFGFI. Residues 499–551 are Cytoplasmic-facing; that stretch reads GSAPTKVKQTTVKTKAVAPVAPAGEEEKKALDQAGVEIPAEGSKKRVTRSTKE. Residues 526 to 551 form a disordered region; that stretch reads KKALDQAGVEIPAEGSKKRVTRSTKE.

Belongs to the calreticulin family.

The protein resides in the endoplasmic reticulum membrane. Functionally, endoplasmic reticulum (ER) chaperone that functions to stabilize non-native glycoproteins and retain them in the ER until they are properly folded or targeted for ER associated degradation (ERAD). With co-chaperone DNJ1, coordinately maintains ER homeostasis and contributes to maintenance of cell wall architecture. In Cryptococcus neoformans var. grubii serotype A (strain H99 / ATCC 208821 / CBS 10515 / FGSC 9487) (Filobasidiella neoformans var. grubii), this protein is Calnexin.